The primary structure comprises 136 residues: Large ribosomal subunit protein uL16 (136 aa).

The protein belongs to the universal ribosomal protein uL16 family. In terms of assembly, part of the 50S ribosomal subunit.

Binds 23S rRNA and is also seen to make contacts with the A and possibly P site tRNAs. This is Large ribosomal subunit protein uL16 from Rickettsia akari (strain Hartford).